The primary structure comprises 231 residues: 7-cyano-7-deazaguanine synthase (231 aa).

An ATP-binding site is contributed by 8–18 (FSGGQDSTTCL). Zn(2+) is bound by residues C188, C197, C200, and C203.

This sequence belongs to the QueC family. Zn(2+) serves as cofactor.

The enzyme catalyses 7-carboxy-7-deazaguanine + NH4(+) + ATP = 7-cyano-7-deazaguanine + ADP + phosphate + H2O + H(+). It participates in purine metabolism; 7-cyano-7-deazaguanine biosynthesis. Its function is as follows. Catalyzes the ATP-dependent conversion of 7-carboxy-7-deazaguanine (CDG) to 7-cyano-7-deazaguanine (preQ(0)). This is 7-cyano-7-deazaguanine synthase from Escherichia fergusonii (strain ATCC 35469 / DSM 13698 / CCUG 18766 / IAM 14443 / JCM 21226 / LMG 7866 / NBRC 102419 / NCTC 12128 / CDC 0568-73).